We begin with the raw amino-acid sequence, 1072 residues long: Serine/threonine-protein kinase 11-interacting protein (1072 aa).

LRR repeat units follow at residues 109–130 (SLRQ…RGIY), 132–152 (QLES…LSAC), 164–185 (ALLS…LRLL), 187–209 (ALRF…MDLC), 210–231 (ELYH…GPSG), 233–254 (ALGT…EQLK), 255–276 (NLRH…APLW), and 280–301 (ELRK…RAAT). The interval 333–366 (DSSGLGPVIQPLSWPVGSTTETSGGPELSDSLSS) is disordered. 3 positions are modified to phosphoserine: Ser-388, Ser-390, and Ser-393. Over residues 441-454 (MGSSPLSTTKTPAL) the composition is skewed to polar residues. Disordered stretches follow at residues 441-522 (MGSS…EQKA) and 741-762 (RPDG…SLSP). Composition is skewed to basic and acidic residues over residues 478–492 (KESP…RVEP) and 501–510 (EQDKEEGSRE). 3 positions are modified to phosphoserine: Ser-757, Ser-761, and Ser-763. A disordered region spans residues 967 to 993 (HAESPLPVVSDETSEQPASLGPGPSLQ).

This sequence belongs to the STK11IP family. As to quaternary structure, found in a ternary complex composed of STK11/LKB1, STK11IP and SMAD4. Interacts with SMAD4. Interacts with STK11/LKB1.

The protein resides in the cytoplasm. Functionally, may regulate STK11/LKB1 function by controlling its subcellular localization. The chain is Serine/threonine-protein kinase 11-interacting protein (Stk11ip) from Mus musculus (Mouse).